Reading from the N-terminus, the 521-residue chain is Glucose-1-phosphate adenylyltransferase large subunit 3, chloroplastic (521 aa).

The N-terminal 61 residues, 1–61 (MDSCCNFSLG…RKLRPGVAYA (61 aa)), are a transit peptide targeting the chloroplast.

This sequence belongs to the bacterial/plant glucose-1-phosphate adenylyltransferase family. As to quaternary structure, heterotetramer. Probably are expressed in roots, flowers and/or seeds.

It is found in the plastid. It localises to the chloroplast. It catalyses the reaction alpha-D-glucose 1-phosphate + ATP + H(+) = ADP-alpha-D-glucose + diphosphate. Its pathway is glycan biosynthesis; starch biosynthesis. Activated by 3'phosphoglycerate, inhibited by orthophosphate. Allosteric regulation. This protein plays a role in synthesis of starch. It catalyzes the synthesis of the activated glycosyl donor, ADP-glucose from Glc-1-P and ATP. The polypeptide is Glucose-1-phosphate adenylyltransferase large subunit 3, chloroplastic (APL3) (Arabidopsis thaliana (Mouse-ear cress)).